We begin with the raw amino-acid sequence, 293 residues long: Ribonuclease HIII (293 aa).

Residues 78 to 293 form the RNase H type-2 domain; that stretch reads LPLIGTDEVG…TEKAKKRLER (216 aa). A divalent metal cation contacts are provided by aspartate 84, glutamate 85, and aspartate 187.

It belongs to the RNase HII family. RnhC subfamily. It depends on Mn(2+) as a cofactor. Mg(2+) is required as a cofactor.

The protein resides in the cytoplasm. It catalyses the reaction Endonucleolytic cleavage to 5'-phosphomonoester.. Endonuclease that specifically degrades the RNA of RNA-DNA hybrids. The protein is Ribonuclease HIII of Streptococcus pneumoniae serotype 19F (strain G54).